A 332-amino-acid chain; its full sequence is Ribosomal RNA small subunit methyltransferase C (332 aa).

The protein belongs to the methyltransferase superfamily. RsmC family. In terms of assembly, monomer.

The protein resides in the cytoplasm. It carries out the reaction guanosine(1207) in 16S rRNA + S-adenosyl-L-methionine = N(2)-methylguanosine(1207) in 16S rRNA + S-adenosyl-L-homocysteine + H(+). Functionally, specifically methylates the guanine in position 1207 of 16S rRNA in the 30S particle. The protein is Ribosomal RNA small subunit methyltransferase C of Pseudomonas entomophila (strain L48).